The following is a 203-amino-acid chain: Glycerol-3-phosphate acyltransferase (203 aa).

5 consecutive transmembrane segments (helical) span residues Leu10 to Met30, Leu60 to Ala80, Ala88 to Phe108, Leu118 to Ile138, and Phe162 to Leu182.

The protein belongs to the PlsY family. In terms of assembly, probably interacts with PlsX.

The protein localises to the cell inner membrane. It catalyses the reaction an acyl phosphate + sn-glycerol 3-phosphate = a 1-acyl-sn-glycero-3-phosphate + phosphate. It participates in lipid metabolism; phospholipid metabolism. Catalyzes the transfer of an acyl group from acyl-phosphate (acyl-PO(4)) to glycerol-3-phosphate (G3P) to form lysophosphatidic acid (LPA). This enzyme utilizes acyl-phosphate as fatty acyl donor, but not acyl-CoA or acyl-ACP. The polypeptide is Glycerol-3-phosphate acyltransferase (Jannaschia sp. (strain CCS1)).